The chain runs to 246 residues: Probable septum site-determining protein MinC (246 aa).

The protein belongs to the MinC family. In terms of assembly, interacts with MinD and FtsZ.

Cell division inhibitor that blocks the formation of polar Z ring septums. Rapidly oscillates between the poles of the cell to destabilize FtsZ filaments that have formed before they mature into polar Z rings. Prevents FtsZ polymerization. The sequence is that of Probable septum site-determining protein MinC from Pseudomonas syringae pv. syringae (strain B728a).